The chain runs to 80 residues: Large ribosomal subunit protein uL24 (80 aa).

A disordered region spans residues 53 to 80; sequence HMRPTQGQTQGSIIEREFPIHSSNVKKS.

The protein belongs to the universal ribosomal protein uL24 family. As to quaternary structure, part of the 50S ribosomal subunit.

One of two assembly initiator proteins, it binds directly to the 5'-end of the 23S rRNA, where it nucleates assembly of the 50S subunit. Functionally, one of the proteins that surrounds the polypeptide exit tunnel on the outside of the subunit. The polypeptide is Large ribosomal subunit protein uL24 (Pelodictyon phaeoclathratiforme (strain DSM 5477 / BU-1)).